The primary structure comprises 202 residues: Snake venom metalloproteinase TM-1 (202 aa).

Gln1 is modified (pyrrolidone carboxylic acid). Residues 7–202 (RYVMLAIVAD…TNPQCILNAP (196 aa)) form the Peptidase M12B domain. 3 disulfide bridges follow: Cys118-Cys197, Cys159-Cys181, and Cys161-Cys164. Residue His143 coordinates Zn(2+). Glu144 is a catalytic residue. Zn(2+)-binding residues include His147 and His153.

It belongs to the venom metalloproteinase (M12B) family. P-I subfamily. In terms of assembly, monomer. Zn(2+) is required as a cofactor. Post-translationally, the N-terminus is blocked. Not glycosylated. Expressed by the venom gland.

The protein localises to the secreted. Its activity is regulated as follows. Inhibited by EDTA and 1,10-phenanthroline. Is also inhibited by endogenous tripeptide inhibitors pyroGlu-Asn-Trp, pyroGlu-Gln-Trp, and pyroGlu-Lys-Trp. Potent fibrinogenolytic protease which cleaves mainly the Aalpha (FGA) and Bbeta (FGB) chains of fibrinogen and slightly the gamma chain (FGG). Shows preference for substrates having a moderate-size and hydrophobic residue at the P1' position. Preferentially cleaves Ala-|-Leu and Tyr-|-Leu bonds. Is more susceptible to tripeptide inhibitors than TM-3 (AC O57413). The polypeptide is Snake venom metalloproteinase TM-1 (Protobothrops mucrosquamatus (Taiwan habu)).